We begin with the raw amino-acid sequence, 193 residues long: dCTP deaminase (193 aa).

DCTP-binding positions include 110 to 115 (RSSLAR), Asp128, 136 to 138 (VLE), Tyr171, Lys178, and Gln182. The Proton donor/acceptor role is filled by Glu138. The disordered stretch occupies residues 169–193 (RPYNSRQDAKYRGQQGAVASRIDKD).

The protein belongs to the dCTP deaminase family. In terms of assembly, homotrimer.

The catalysed reaction is dCTP + H2O + H(+) = dUTP + NH4(+). Its pathway is pyrimidine metabolism; dUMP biosynthesis; dUMP from dCTP (dUTP route): step 1/2. Catalyzes the deamination of dCTP to dUTP. This Yersinia pestis bv. Antiqua (strain Antiqua) protein is dCTP deaminase.